The sequence spans 81 residues: Cytoplasmic envelopment protein 3 (81 aa).

G2 is lipidated: N-myristoyl glycine; by host. The Di-leucine-like internalization motif signature appears at 22-23; that stretch reads LV. An asp/Glu-rich (acidic) region spans residues 41 to 47; that stretch reads DFDENVT. The tract at residues 47–81 is disordered; it reads TEDADKSTQRRPRVIDVTPKRKPSGKSSHSKCAKC. The segment covering 66–81 has biased composition (basic residues); the sequence is KRKPSGKSSHSKCAKC.

This sequence belongs to the herpesviridae cytoplasmic envelopment protein 3 family. In terms of assembly, interacts with cytoplasmic envelopment protein 2; this interaction is essential for the proper localization of each protein to the assembly complex and thus for the production of infectious virus. Myristoylation and palmitoylation (probably on one or more of the nearby cysteines at the N-terminus) enable membrane-binding and Golgi apparatus-specific targeting and are essential for efficient packaging. Post-translationally, phosphorylated. Phosphorylation does not seem to be required for recycling to the host Golgi apparatus. Packaging is selective for underphosphorylated forms.

The protein resides in the virion tegument. It localises to the virion membrane. Its subcellular location is the host cell membrane. The protein localises to the host Golgi apparatus membrane. Plays an important role in the cytoplasmic envelopment of tegument proteins and capsids during the assembly and egress processes. Also participates in viral entry at the fusion step probably by regulating the core fusion machinery. The sequence is that of Cytoplasmic envelopment protein 3 from Homo sapiens (Human).